Consider the following 245-residue polypeptide: Ribonuclease PH (245 aa).

Residues Arg-86 and 124–126 each bind phosphate; that span reads GTR.

This sequence belongs to the RNase PH family. In terms of assembly, homohexameric ring arranged as a trimer of dimers.

It catalyses the reaction tRNA(n+1) + phosphate = tRNA(n) + a ribonucleoside 5'-diphosphate. Phosphorolytic 3'-5' exoribonuclease that plays an important role in tRNA 3'-end maturation. Removes nucleotide residues following the 3'-CCA terminus of tRNAs; can also add nucleotides to the ends of RNA molecules by using nucleoside diphosphates as substrates, but this may not be physiologically important. Probably plays a role in initiation of 16S rRNA degradation (leading to ribosome degradation) during starvation. The sequence is that of Ribonuclease PH from Bacillus anthracis (strain A0248).